Here is a 291-residue protein sequence, read N- to C-terminus: Membrane protein insertase YidC (291 aa).

Positions 1–19 (MKKKALLPLLLGVMVFLAG) are cleaved as a signal peptide. C20 is lipidated: N-palmitoyl cysteine. A lipid anchor (S-diacylglycerol cysteine) is attached at C20. The next 4 helical transmembrane spans lie at 56–76 (YGIA…PFML), 134–154 (ALGC…YFVL), 170–190 (WFNL…LYFI), and 211–231 (MIVS…ALGL). The segment at 266 to 291 (FKENNSNSNKKGKNTQVVSKNNKKKK) is disordered.

The protein belongs to the OXA1/ALB3/YidC family. Type 2 subfamily.

The protein localises to the cell membrane. Required for the insertion and/or proper folding and/or complex formation of integral membrane proteins into the membrane. Involved in integration of membrane proteins that insert both dependently and independently of the Sec translocase complex, as well as at least some lipoproteins. The sequence is that of Membrane protein insertase YidC from Staphylococcus haemolyticus (strain JCSC1435).